We begin with the raw amino-acid sequence, 512 residues long: Solute carrier family 2, facilitated glucose transporter member 7 (512 aa).

Topologically, residues 1-21 (MENKEAGTPPPIPSREGRLQP) are cytoplasmic. Residues 22–42 (TLLLATLSAAFGSAFQYGYNL) form a helical membrane-spanning segment. Residues 43-78 (SVVNTPHKVFKSFYNETYFERHATFMDGKLMLLLWS) are Extracellular-facing. Residue Asn57 is glycosylated (N-linked (GlcNAc...) asparagine). Residues 79–99 (CTVSMFPLGGLLGSLLVGLLV) traverse the membrane as a helical segment. Topologically, residues 100-107 (DSCGRKGT) are cytoplasmic. Residues 108 to 128 (LLINNIFAIIPAILMGVSKVA) traverse the membrane as a helical segment. At 129–138 (KAFELIVFSR) the chain is on the extracellular side. A helical transmembrane segment spans residues 139 to 159 (VVLGVCAGISYSALPMYLGEL). Residues 160–172 (APKNLRGMVGTMT) are Cytoplasmic-facing. Residues 173–193 (EVFVIVGVFLAQIFSLQAILG) traverse the membrane as a helical segment. Residues 194–198 (NPAGW) are Extracellular-facing. A helical membrane pass occupies residues 199 to 219 (PVLLALTGVPALLQLLTLPFF). At 220 to 281 (PESPRYSLIQ…LHLCALRSLR (62 aa)) the chain is on the cytoplasmic side. Residues 282 to 302 (WQLLSIIVLMAGQQLSGINAI) traverse the membrane as a helical segment. D-glucose contacts are provided by residues 294–295 (QQ) and Asn300. At 303–321 (NYYADTIYTSAGVEAAHSQ) the chain is on the extracellular side. The helical transmembrane segment at 322–342 (YVTVGSGVVNIVMTITSAVLV) threads the bilayer. Position 331 (Asn331) interacts with D-glucose. Residues 343–350 (ERLGRRHL) lie on the Cytoplasmic side of the membrane. Residues 351 to 371 (LLAGYGICGSACLVLTVVLLF) form a helical membrane-spanning segment. Topologically, residues 372-379 (QNRVPELS) are extracellular. A helical membrane pass occupies residues 380-400 (YLGIICVFAYIAGHSIGPSPV). Over 401 to 415 (PSVVRTEIFLQSSRR) the chain is Cytoplasmic. The chain crosses the membrane as a helical span at residues 416-436 (AAFMVDGAVHWLTNFIIGFLF). The Extracellular segment spans residues 437–445 (PSIQEAIGA). A helical transmembrane segment spans residues 446 to 466 (YSFIIFAGICLLTAIYIYVVI). Residues 467-512 (PETKGKTFVEINRIFAKRNRVKLPEEKEETIDAGPPTASPAKETSF) are Cytoplasmic-facing. Residues 491-512 (EEKEETIDAGPPTASPAKETSF) are disordered.

Belongs to the major facilitator superfamily. Sugar transporter (TC 2.A.1.1) family. Glucose transporter subfamily. As to expression, expressed in small intestine and colon. Weakly expressed in testis and prostate.

Its subcellular location is the cell membrane. The protein localises to the apical cell membrane. It carries out the reaction D-glucose(out) = D-glucose(in). It catalyses the reaction D-fructose(out) = D-fructose(in). Its activity is regulated as follows. Glucose and fructose transport are inhibited by the flavonoid apigenin. In terms of biological role, probable sugar transporter. Even if its physiological substrate is subject to discussion, it is able to transport glucose and fructose. Does not transport galactose, 2-deoxy-d-glucose and xylose. The protein is Solute carrier family 2, facilitated glucose transporter member 7 of Homo sapiens (Human).